The following is a 179-amino-acid chain: Large ribosomal subunit protein uL6 (179 aa).

It belongs to the universal ribosomal protein uL6 family. Part of the 50S ribosomal subunit.

Functionally, this protein binds to the 23S rRNA, and is important in its secondary structure. It is located near the subunit interface in the base of the L7/L12 stalk, and near the tRNA binding site of the peptidyltransferase center. This chain is Large ribosomal subunit protein uL6, found in Synechococcus sp. (strain WH7803).